A 316-amino-acid chain; its full sequence is Protein lifeguard 2 (316 aa).

A disordered region spans residues Met-1–Ala-49. The next 3 membrane-spanning stretches (helical) occupy residues Val-106–Phe-126, Pro-138–Cys-158, and Phe-165–Met-185. Asn-191 carries N-linked (GlcNAc...) asparagine glycosylation. Transmembrane regions (helical) follow at residues Ser-194–Phe-214, Gly-225–Leu-245, Pro-251–Phe-271, and Ile-290–Leu-310.

This sequence belongs to the BI1 family. LFG subfamily. In terms of assembly, interacts with FAS/TNFRSF6 and BAX. Expressed at high levels on dendrites and to a lesser extent on the soma and axons of neurons in various regions of brain.

Its subcellular location is the cell membrane. The protein localises to the membrane raft. The protein resides in the postsynaptic cell membrane. In terms of biological role, antiapoptotic protein which protects cells uniquely from Fas-induced apoptosis. Regulates Fas-mediated apoptosis in neurons by interfering with caspase-8 activation. Plays a role in cerebellar development by affecting cerebellar size, internal granular layer (IGL) thickness, and Purkinje cell (PC) development. The chain is Protein lifeguard 2 (Faim2) from Rattus norvegicus (Rat).